Here is a 260-residue protein sequence, read N- to C-terminus: Ribosomal RNA small subunit methyltransferase A (260 aa).

Leu-23, Gly-48, Glu-69, Asp-94, and Asn-110 together coordinate S-adenosyl-L-methionine.

It belongs to the class I-like SAM-binding methyltransferase superfamily. rRNA adenine N(6)-methyltransferase family. RsmA subfamily.

The protein localises to the cytoplasm. It carries out the reaction adenosine(1518)/adenosine(1519) in 16S rRNA + 4 S-adenosyl-L-methionine = N(6)-dimethyladenosine(1518)/N(6)-dimethyladenosine(1519) in 16S rRNA + 4 S-adenosyl-L-homocysteine + 4 H(+). Specifically dimethylates two adjacent adenosines (A1518 and A1519) in the loop of a conserved hairpin near the 3'-end of 16S rRNA in the 30S particle. May play a critical role in biogenesis of 30S subunits. The chain is Ribosomal RNA small subunit methyltransferase A from Thermotoga neapolitana (strain ATCC 49049 / DSM 4359 / NBRC 107923 / NS-E).